A 750-amino-acid chain; its full sequence is Cation-transporting P-type ATPase B (750 aa).

An HMA domain is found at 17–80 (RRIQLDVAGM…VIEQAGYRAT (64 aa)). A metal cation is bound by residues cysteine 28 and cysteine 31. The next 6 helical transmembrane spans lie at 104–124 (LIVA…FAIV), 129–149 (FPGW…WAAW), 167–187 (ETLI…TIFV), 200–220 (AILH…VFVL), 360–380 (IAAV…ASWL), and 389–409 (AFSV…GLAT). Aspartate 445 functions as the 4-aspartylphosphate intermediate in the catalytic mechanism. 6 helical membrane passes run 471-491 (VLAL…TAIV), 500-520 (VADF…EHHV), 547-567 (SRGE…AVAI), 663-683 (VAIG…VPVA), 693-713 (TIRI…PIAS), and 715-735 (GLLN…FVVS).

It belongs to the cation transport ATPase (P-type) (TC 3.A.3) family. Type IB subfamily.

Its subcellular location is the cell membrane. It carries out the reaction ATP + H2O = ADP + phosphate + H(+). This Mycobacterium leprae (strain TN) protein is Cation-transporting P-type ATPase B (ctpB).